The chain runs to 142 residues: Large ribosomal subunit protein uL24 (142 aa).

A compositionally biased stretch (polar residues) spans 1–11 (MKVNPFVSSDS). Residues 1–24 (MKVNPFVSSDSGKSRKAHFNAPSH) are disordered.

It belongs to the universal ribosomal protein uL24 family.

The chain is Large ribosomal subunit protein uL24 (rpl-26) from Caenorhabditis elegans.